The chain runs to 356 residues: MIKAAATLKSLQYRQNSLTDCYGRLSFGPVNPGQGLTIGNTLRRILLNDLPGIGVIGAEINGVQSEFSTLPGIRESVIEIFLNLRELIFTPTATCAQKVKQTKPFVYAKLNSELKIDNFPYVVTAKDLHIPEYEFVDPNQQIATILSPTAAENFKLTLLIGQGRGYQSWKKLPGVPQLMDQRFFEQFDSTQTNSKSVTFPIDAIFMPIRQVNFTVQEHSVDGEYIYFEVWTNGSINPFDAVKSAAKVGMKLMTACLTTLQDQQVYLDESKLPETPNFVQVNYNKMESESNFDQIFIEQLELSLRAYNCLKRANILTLADLSQQSFRDLMKLRNFGQKSADEVRAALSTYGIELKED.

Positions 1 to 259 are alpha N-terminal domain (alpha-NTD); that stretch reads MIKAAATLKS…KLMTACLTTL (259 aa). The interval 277–356 is alpha C-terminal domain (alpha-CTD); that stretch reads FVQVNYNKME…STYGIELKED (80 aa).

This sequence belongs to the RNA polymerase alpha chain family. As to quaternary structure, in plastids the minimal PEP RNA polymerase catalytic core is composed of four subunits: alpha, beta, beta', and beta''. When a (nuclear-encoded) sigma factor is associated with the core the holoenzyme is formed, which can initiate transcription.

The protein resides in the plastid. The protein localises to the chloroplast. The catalysed reaction is RNA(n) + a ribonucleoside 5'-triphosphate = RNA(n+1) + diphosphate. Functionally, DNA-dependent RNA polymerase catalyzes the transcription of DNA into RNA using the four ribonucleoside triphosphates as substrates. This chain is DNA-directed RNA polymerase subunit alpha, found in Ostreococcus tauri.